The following is a 251-amino-acid chain: Hydroxyacylglutathione hydrolase (251 aa).

7 residues coordinate Zn(2+): His-53, His-55, Asp-57, His-58, His-110, Asp-127, and His-165.

It belongs to the metallo-beta-lactamase superfamily. Glyoxalase II family. In terms of assembly, monomer. Requires Zn(2+) as cofactor.

It catalyses the reaction an S-(2-hydroxyacyl)glutathione + H2O = a 2-hydroxy carboxylate + glutathione + H(+). It functions in the pathway secondary metabolite metabolism; methylglyoxal degradation; (R)-lactate from methylglyoxal: step 2/2. In terms of biological role, thiolesterase that catalyzes the hydrolysis of S-D-lactoyl-glutathione to form glutathione and D-lactic acid. The polypeptide is Hydroxyacylglutathione hydrolase (Erwinia tasmaniensis (strain DSM 17950 / CFBP 7177 / CIP 109463 / NCPPB 4357 / Et1/99)).